The following is a 623-amino-acid chain: MAU2 chromatid cohesion factor homolog (623 aa).

TPR repeat units lie at residues 96 to 129 (FDTA…SQNN), 451 to 484 (GGFY…ANAE), and 491 to 524 (SCSL…ASKI).

The protein belongs to the SCC4/mau-2 family. Interacts with Nipped-B to form the cohesin loading complex.

The protein resides in the nucleus. The protein localises to the nucleoplasm. Its function is as follows. Required for association of the cohesin complex with chromatin during interphase. Plays a role in sister chromatid cohesion and normal progression through prometaphase. This is MAU2 chromatid cohesion factor homolog from Drosophila grimshawi (Hawaiian fruit fly).